Consider the following 272-residue polypeptide: Magnetosome protein MamQ (272 aa).

Topologically, residues 1–46 are cytoplasmic; the sequence is MAVSDADASSVDKVESITLQRVKQSEELLAQLYVVEESPRRMGRGP. Residues 47-67 traverse the membrane as a helical segment; it reads VQLMLAISVLSLVAFITTLLM. Topologically, residues 68-272 are lumenal; the sequence is RYNAFVTMYE…PLTHSQESKN (205 aa).

The protein belongs to the LemA family.

Its subcellular location is the magnetosome membrane. It localises to the cell inner membrane. Functionally, essential for magnetosome formation. Not essential for formation of magnetosome membrane vesicles. One of 7 genes (mamLQBIEMO) able to induce magnetosome membrane biogenesis; coexpression of mamLQRBIEMO in a deletion of the 17 gene mamAB operon restores magnetosome vesicle formation but not magnetite biosynthesis. The polypeptide is Magnetosome protein MamQ (Magnetospirillum gryphiswaldense (strain DSM 6361 / JCM 21280 / NBRC 15271 / MSR-1)).